The sequence spans 882 residues: Valine--tRNA ligase (882 aa).

Residues 45 to 55 (PNVTGKLHLGH) carry the 'HIGH' region motif. The 'KMSKS' region motif lies at 519–523 (KMSKS). Position 522 (Lys-522) interacts with ATP. Residues 808–882 (LADLLNVEEE…RIAEMQKLVK (75 aa)) adopt a coiled-coil conformation.

This sequence belongs to the class-I aminoacyl-tRNA synthetase family. ValS type 1 subfamily. Monomer.

Its subcellular location is the cytoplasm. The enzyme catalyses tRNA(Val) + L-valine + ATP = L-valyl-tRNA(Val) + AMP + diphosphate. Catalyzes the attachment of valine to tRNA(Val). As ValRS can inadvertently accommodate and process structurally similar amino acids such as threonine, to avoid such errors, it has a 'posttransfer' editing activity that hydrolyzes mischarged Thr-tRNA(Val) in a tRNA-dependent manner. The sequence is that of Valine--tRNA ligase from Streptococcus pyogenes serotype M3 (strain ATCC BAA-595 / MGAS315).